We begin with the raw amino-acid sequence, 339 residues long: Small ribosomal subunit protein mS27 (339 aa).

The transit peptide at 1–37 (MGTITVVINEGPILLIRALHRATTNKKMFRSTVWRRF) directs the protein to the mitochondrion.

It belongs to the mitochondrion-specific ribosomal protein mS27 family. As to quaternary structure, component of the mitochondrial small ribosomal subunit (mt-SSU). Mature yeast 74S mitochondrial ribosomes consist of a small (37S) and a large (54S) subunit. The 37S small subunit contains a 15S ribosomal RNA (15S mt-rRNA) and 34 different proteins. The 54S large subunit contains a 21S rRNA (21S mt-rRNA) and 46 different proteins.

Its subcellular location is the mitochondrion. In terms of biological role, component of the mitochondrial ribosome (mitoribosome), a dedicated translation machinery responsible for the synthesis of mitochondrial genome-encoded proteins, including at least some of the essential transmembrane subunits of the mitochondrial respiratory chain. The mitoribosomes are attached to the mitochondrial inner membrane and translation products are cotranslationally integrated into the membrane. The polypeptide is Small ribosomal subunit protein mS27 (MRP13) (Saccharomyces cerevisiae (strain ATCC 204508 / S288c) (Baker's yeast)).